The primary structure comprises 172 residues: C-phycocyanin beta subunit (172 aa).

The residue at position 72 (Asn-72) is an N4-methylasparagine. (2R,3E)-phycocyanobilin is bound by residues Cys-82 and Cys-153.

This sequence belongs to the phycobiliprotein family. Heterodimer of an alpha and a beta chain, which further assembles into trimers. The trimers assemble into hexamers, although these were not seen in the crystallographic studies. Part of 2 PBS rod complexes, the conventional CpcG-PBS rod and a photosystem I-specific CpcL-PBS rod, both of which include ferredoxin--NADP reductase (petH). Interacts with rod linker CpcC2 via the latter's N-terminal PBS-linker domain. Contains two covalently linked bilin chromophores.

Its subcellular location is the cellular thylakoid membrane. Its function is as follows. Light-harvesting photosynthetic bile pigment-protein from the phycobiliprotein complex (phycobilisome, PBS). Phycocyanin is the major phycobiliprotein in the PBS rod. The chain is C-phycocyanin beta subunit (cpcB) from Synechocystis sp. (strain ATCC 27184 / PCC 6803 / Kazusa).